The primary structure comprises 322 residues: Chromoplast-specific carotenoid-associated protein, chromoplastic (322 aa).

Residues 1-58 (MAFVSQFNQLPCKTLALNPPQPQLTSKPSVFPIASIGATARAAAGKSLISVRPAFKVR) constitute a chromoplast transit peptide. Positions 67-88 (GEDKDEKYGDDSSVAVAEKEEE) are disordered.

It belongs to the PAP/fibrillin family. Expressed in corollas. Not detected in fruits, stems, leaves, and roots.

It localises to the plastid. The protein resides in the chromoplast. May be involved in carotenoid sequestration within chromoplasts. The polypeptide is Chromoplast-specific carotenoid-associated protein, chromoplastic (CHRC) (Cucumis sativus (Cucumber)).